The following is a 225-amino-acid chain: ATP-dependent dethiobiotin synthetase BioD (225 aa).

Residue 12–17 (EIGKTY) participates in ATP binding. Residue Thr-16 coordinates Mg(2+). Lys-37 is an active-site residue. Residue Ser-41 coordinates substrate. ATP is bound by residues Asp-55, 122–125 (EGVG), and 182–183 (SE). Mg(2+) contacts are provided by Asp-55 and Glu-122.

It belongs to the dethiobiotin synthetase family. In terms of assembly, homodimer. Mg(2+) serves as cofactor.

It is found in the cytoplasm. The catalysed reaction is (7R,8S)-7,8-diammoniononanoate + CO2 + ATP = (4R,5S)-dethiobiotin + ADP + phosphate + 3 H(+). The protein operates within cofactor biosynthesis; biotin biosynthesis; biotin from 7,8-diaminononanoate: step 1/2. Its function is as follows. Catalyzes a mechanistically unusual reaction, the ATP-dependent insertion of CO2 between the N7 and N8 nitrogen atoms of 7,8-diaminopelargonic acid (DAPA, also called 7,8-diammoniononanoate) to form a ureido ring. This Methylobacterium nodulans (strain LMG 21967 / CNCM I-2342 / ORS 2060) protein is ATP-dependent dethiobiotin synthetase BioD.